The chain runs to 115 residues: Flagellar transcriptional regulator FlhD (115 aa).

Belongs to the FlhD family. Homodimer; disulfide-linked. Forms a heterohexamer composed of two FlhC and four FlhD subunits. Each FlhC binds a FlhD dimer, forming a heterotrimer, and a hexamer assembles by dimerization of two heterotrimers.

It is found in the cytoplasm. Functions in complex with FlhC as a master transcriptional regulator that regulates transcription of several flagellar and non-flagellar operons by binding to their promoter region. Activates expression of class 2 flagellar genes, including fliA, which is a flagellum-specific sigma factor that turns on the class 3 genes. Also regulates genes whose products function in a variety of physiological pathways. This is Flagellar transcriptional regulator FlhD from Edwardsiella ictaluri (strain 93-146).